The primary structure comprises 98 residues: Putative pterin-4-alpha-carbinolamine dehydratase (98 aa).

The protein belongs to the pterin-4-alpha-carbinolamine dehydratase family.

It carries out the reaction (4aS,6R)-4a-hydroxy-L-erythro-5,6,7,8-tetrahydrobiopterin = (6R)-L-erythro-6,7-dihydrobiopterin + H2O. The polypeptide is Putative pterin-4-alpha-carbinolamine dehydratase (Chelativorans sp. (strain BNC1)).